Reading from the N-terminus, the 524-residue chain is Cytosolic Fe-S cluster assembly factor NAR1 (524 aa).

[4Fe-4S] cluster contacts are provided by C20, C52, C55, C58, C158, and C206. The tract at residues 362–388 (IRKRPTANGNDNSISLSSSINNQDNNN) is disordered. The segment covering 369-388 (NGNDNSISLSSSINNQDNNN) has biased composition (low complexity). [4Fe-4S] cluster is bound by residues C408 and C412. The tract at residues 501–524 (SSISETHNGDSKNTIEQPVQFTTW) is disordered.

This sequence belongs to the NARF family.

Functionally, component of the cytosolic Fe/S protein assembly machinery. Required for maturation of extramitochondrial Fe/S proteins. May play a role in the transfer of pre-assembled Fe/S clusters to target apoproteins. In Vanderwaltozyma polyspora (strain ATCC 22028 / DSM 70294 / BCRC 21397 / CBS 2163 / NBRC 10782 / NRRL Y-8283 / UCD 57-17) (Kluyveromyces polysporus), this protein is Cytosolic Fe-S cluster assembly factor NAR1 (NAR1).